The sequence spans 125 residues: Small ribosomal subunit protein uS13 (125 aa).

Positions 99 to 125 are disordered; that stretch reads RGQRTKTNARTRKGKRKTVANKKMAAK.

The protein belongs to the universal ribosomal protein uS13 family. Part of the 30S ribosomal subunit. Forms a loose heterodimer with protein S19. Forms two bridges to the 50S subunit in the 70S ribosome.

Located at the top of the head of the 30S subunit, it contacts several helices of the 16S rRNA. In the 70S ribosome it contacts the 23S rRNA (bridge B1a) and protein L5 of the 50S subunit (bridge B1b), connecting the 2 subunits; these bridges are implicated in subunit movement. Contacts the tRNAs in the A and P-sites. The protein is Small ribosomal subunit protein uS13 of Borrelia turicatae (strain 91E135).